Here is an 89-residue protein sequence, read N- to C-terminus: Large ribosomal subunit protein bL27 (89 aa).

The interval 1–24 (MAHKKAGGSSRNGRDSAGRRLGVK) is disordered.

It belongs to the bacterial ribosomal protein bL27 family.

This Maricaulis maris (strain MCS10) (Caulobacter maris) protein is Large ribosomal subunit protein bL27.